A 199-amino-acid polypeptide reads, in one-letter code: Tegument protein UL14 homolog (199 aa).

Residues 176–191 show a composition bias toward polar residues; the sequence is TDMNQMQPQPISKNEN. A disordered region spans residues 176 to 199; that stretch reads TDMNQMQPQPISKNENPPTPHTDV.

It belongs to the alphaherpesvirinae HHV-1 UL14 protein family.

It is found in the virion tegument. Its subcellular location is the host cytoplasm. It localises to the host nucleus. Functionally, contributes to the nuclear transport of the viral transcriptional activator VP16 homolog during the early phase of infection. Therefore, participates indirectly in the regulation of the immediate-early gene expression. Additionally, seems to be important for efficient nuclear targeting of capsids. In Varicella-zoster virus (strain Dumas) (HHV-3), this protein is Tegument protein UL14 homolog.